The following is a 296-amino-acid chain: Lipoyl synthase (296 aa).

Residues cysteine 37, cysteine 42, cysteine 48, cysteine 63, cysteine 67, cysteine 70, and serine 276 each contribute to the [4Fe-4S] cluster site. In terms of domain architecture, Radical SAM core spans 49–265; it reads WSKKHTTVMI…ERVAKTKGFL (217 aa).

It belongs to the radical SAM superfamily. Lipoyl synthase family. It depends on [4Fe-4S] cluster as a cofactor.

It localises to the cytoplasm. It catalyses the reaction [[Fe-S] cluster scaffold protein carrying a second [4Fe-4S](2+) cluster] + N(6)-octanoyl-L-lysyl-[protein] + 2 oxidized [2Fe-2S]-[ferredoxin] + 2 S-adenosyl-L-methionine + 4 H(+) = [[Fe-S] cluster scaffold protein] + N(6)-[(R)-dihydrolipoyl]-L-lysyl-[protein] + 4 Fe(3+) + 2 hydrogen sulfide + 2 5'-deoxyadenosine + 2 L-methionine + 2 reduced [2Fe-2S]-[ferredoxin]. It participates in protein modification; protein lipoylation via endogenous pathway; protein N(6)-(lipoyl)lysine from octanoyl-[acyl-carrier-protein]: step 2/2. Catalyzes the radical-mediated insertion of two sulfur atoms into the C-6 and C-8 positions of the octanoyl moiety bound to the lipoyl domains of lipoate-dependent enzymes, thereby converting the octanoylated domains into lipoylated derivatives. The chain is Lipoyl synthase from Rickettsia peacockii (strain Rustic).